A 374-amino-acid chain; its full sequence is uncharacterized protein (374 aa).

Residues 39 to 66 (RDVRKHLESRDAKQELIDSLEEAVRDSR) are a coiled coil.

This is an uncharacterized protein from Mycobacterium tuberculosis (strain CDC 1551 / Oshkosh).